The sequence spans 569 residues: Urease subunit alpha (569 aa).

The Urease domain occupies 131–569 (GAIDSHIHFI…LPLAQRYLLL (439 aa)). Residues His136, His138, and Lys219 each coordinate Ni(2+). At Lys219 the chain carries N6-carboxylysine. A substrate-binding site is contributed by His221. His248 and His274 together coordinate Ni(2+). His322 acts as the Proton donor in catalysis. Asp362 lines the Ni(2+) pocket.

This sequence belongs to the metallo-dependent hydrolases superfamily. Urease alpha subunit family. Heterotrimer of UreA (gamma), UreB (beta) and UreC (alpha) subunits. Three heterotrimers associate to form the active enzyme. Requires Ni cation as cofactor. Post-translationally, carboxylation allows a single lysine to coordinate two nickel ions.

Its subcellular location is the cytoplasm. The enzyme catalyses urea + 2 H2O + H(+) = hydrogencarbonate + 2 NH4(+). The protein operates within nitrogen metabolism; urea degradation; CO(2) and NH(3) from urea (urease route): step 1/1. The polypeptide is Urease subunit alpha (Prochlorococcus marinus (strain NATL1A)).